An 842-amino-acid polypeptide reads, in one-letter code: Glucans biosynthesis glucosyltransferase H (842 aa).

A run of 7 helical transmembrane segments spans residues 140 to 160 (ILLL…KTIL), 194 to 214 (ILIL…TALM), 513 to 533 (VFLT…FLAL), 568 to 588 (IALF…SIIL), 615 to 635 (VLLA…AFLG), 656 to 676 (FMRH…MAWL), and 680 to 700 (FLFW…VSAI).

Belongs to the glycosyltransferase 2 family. OpgH subfamily.

The protein localises to the cell inner membrane. The protein operates within glycan metabolism; osmoregulated periplasmic glucan (OPG) biosynthesis. Its function is as follows. Involved in the biosynthesis of osmoregulated periplasmic glucans (OPGs). This is Glucans biosynthesis glucosyltransferase H from Klebsiella pneumoniae subsp. pneumoniae (strain ATCC 700721 / MGH 78578).